We begin with the raw amino-acid sequence, 73 residues long: UPF0150 protein ssl0259 (73 aa).

The protein belongs to the UPF0150 family.

This chain is UPF0150 protein ssl0259, found in Synechocystis sp. (strain ATCC 27184 / PCC 6803 / Kazusa).